A 384-amino-acid polypeptide reads, in one-letter code: tRNA-specific 2-thiouridylase MnmA (384 aa).

ATP-binding positions include A18–S25 and L44. The Nucleophile role is filled by C112. A disulfide bridge connects residues C112 and C209. Position 136 (G136) interacts with ATP. The interval R159 to Q161 is interaction with tRNA. C209 serves as the catalytic Cysteine persulfide intermediate.

Belongs to the MnmA/TRMU family.

Its subcellular location is the cytoplasm. It carries out the reaction S-sulfanyl-L-cysteinyl-[protein] + uridine(34) in tRNA + AH2 + ATP = 2-thiouridine(34) in tRNA + L-cysteinyl-[protein] + A + AMP + diphosphate + H(+). Catalyzes the 2-thiolation of uridine at the wobble position (U34) of tRNA, leading to the formation of s(2)U34. This Methylobacterium radiotolerans (strain ATCC 27329 / DSM 1819 / JCM 2831 / NBRC 15690 / NCIMB 10815 / 0-1) protein is tRNA-specific 2-thiouridylase MnmA.